The primary structure comprises 470 residues: 3-isopropylmalate dehydratase large subunit (470 aa).

Residues cysteine 348, cysteine 409, and cysteine 412 each coordinate [4Fe-4S] cluster.

This sequence belongs to the aconitase/IPM isomerase family. LeuC type 1 subfamily. Heterodimer of LeuC and LeuD. [4Fe-4S] cluster is required as a cofactor.

It carries out the reaction (2R,3S)-3-isopropylmalate = (2S)-2-isopropylmalate. It functions in the pathway amino-acid biosynthesis; L-leucine biosynthesis; L-leucine from 3-methyl-2-oxobutanoate: step 2/4. Functionally, catalyzes the isomerization between 2-isopropylmalate and 3-isopropylmalate, via the formation of 2-isopropylmaleate. This Thioalkalivibrio sulfidiphilus (strain HL-EbGR7) protein is 3-isopropylmalate dehydratase large subunit.